We begin with the raw amino-acid sequence, 578 residues long: tRNA (guanine(26)-N(2))-dimethyltransferase (578 aa).

A Trm1 methyltransferase domain is found at 18-451 (NVIRERNAEI…APPAVLWDIL (434 aa)). R43 contributes to the S-adenosyl-L-methionine binding site. Positions 63–92 (EKALKKQRKKVKEQEDEKTTPVPEDPPVYE) are disordered. R113 and D131 together coordinate S-adenosyl-L-methionine. Positions 295, 298, 335, and 338 each coordinate Zn(2+). The segment at 491–578 (EANPKSRKSA…PKQPKLEATA (88 aa)) is disordered. The segment covering 564 to 578 (DVEHLPKQPKLEATA) has biased composition (basic and acidic residues).

This sequence belongs to the class I-like SAM-binding methyltransferase superfamily. Trm1 family.

The enzyme catalyses guanosine(26) in tRNA + 2 S-adenosyl-L-methionine = N(2)-dimethylguanosine(26) in tRNA + 2 S-adenosyl-L-homocysteine + 2 H(+). Dimethylates a single guanine residue at position 26 of most tRNAs using S-adenosyl-L-methionine as donor of the methyl groups. This chain is tRNA (guanine(26)-N(2))-dimethyltransferase, found in Drosophila melanogaster (Fruit fly).